Here is a 113-residue protein sequence, read N- to C-terminus: uncharacterized protein (113 aa).

This is an uncharacterized protein from Ureaplasma parvum serovar 3 (strain ATCC 700970).